A 415-amino-acid polypeptide reads, in one-letter code: Probable disease resistance protein At5g66890 (415 aa).

Residues Ser-8 to Ala-43 enclose the NB-ARC domain. LRR repeat units lie at residues Ser-229–Ser-251, Ser-256–Val-278, Ser-280–Arg-303, Asp-304–Leu-326, Asn-328–Lys-351, and Lys-352–Leu-373. The stretch at His-239–Ile-260 forms a coiled coil.

This sequence belongs to the disease resistance NB-LRR family.

Functionally, possible disease resistance protein. This is Probable disease resistance protein At5g66890 from Arabidopsis thaliana (Mouse-ear cress).